A 601-amino-acid chain; its full sequence is Elongation factor 4 (601 aa).

The tr-type G domain maps to 6–188 (KNIRNFSIIA…QIIKKIPAPD (183 aa)). GTP contacts are provided by residues 18–23 (DHGKST) and 135–138 (NKID).

This sequence belongs to the TRAFAC class translation factor GTPase superfamily. Classic translation factor GTPase family. LepA subfamily.

It is found in the cell membrane. The enzyme catalyses GTP + H2O = GDP + phosphate + H(+). Its function is as follows. Required for accurate and efficient protein synthesis under certain stress conditions. May act as a fidelity factor of the translation reaction, by catalyzing a one-codon backward translocation of tRNAs on improperly translocated ribosomes. Back-translocation proceeds from a post-translocation (POST) complex to a pre-translocation (PRE) complex, thus giving elongation factor G a second chance to translocate the tRNAs correctly. Binds to ribosomes in a GTP-dependent manner. The polypeptide is Elongation factor 4 (Buchnera aphidicola subsp. Schizaphis graminum (strain Sg)).